A 324-amino-acid chain; its full sequence is Phospho-N-acetylmuramoyl-pentapeptide-transferase (324 aa).

The next 10 helical transmembrane spans lie at 5-25 (VILF…PIFI), 52-72 (PTMG…VMTM), 77-97 (VSMN…LGFL), 117-137 (LIGQ…QGMP), 147-167 (LSFD…VGGS), 176-196 (LDGL…ILAW), 203-223 (VAIF…FNAH), 227-247 (VFMG…IAIL), 250-270 (LEIL…SVIL), and 302-322 (VVVT…YIEV).

This sequence belongs to the glycosyltransferase 4 family. MraY subfamily. It depends on Mg(2+) as a cofactor.

The protein resides in the cell membrane. It catalyses the reaction UDP-N-acetyl-alpha-D-muramoyl-L-alanyl-gamma-D-glutamyl-meso-2,6-diaminopimeloyl-D-alanyl-D-alanine + di-trans,octa-cis-undecaprenyl phosphate = di-trans,octa-cis-undecaprenyl diphospho-N-acetyl-alpha-D-muramoyl-L-alanyl-D-glutamyl-meso-2,6-diaminopimeloyl-D-alanyl-D-alanine + UMP. It participates in cell wall biogenesis; peptidoglycan biosynthesis. Functionally, catalyzes the initial step of the lipid cycle reactions in the biosynthesis of the cell wall peptidoglycan: transfers peptidoglycan precursor phospho-MurNAc-pentapeptide from UDP-MurNAc-pentapeptide onto the lipid carrier undecaprenyl phosphate, yielding undecaprenyl-pyrophosphoryl-MurNAc-pentapeptide, known as lipid I. The chain is Phospho-N-acetylmuramoyl-pentapeptide-transferase from Bacillus licheniformis (strain ATCC 14580 / DSM 13 / JCM 2505 / CCUG 7422 / NBRC 12200 / NCIMB 9375 / NCTC 10341 / NRRL NRS-1264 / Gibson 46).